Reading from the N-terminus, the 252-residue chain is Probable phosphatase Shewana3_2794 (252 aa).

Zn(2+)-binding residues include H8, H10, H16, H41, E74, H102, H132, D193, and H195.

It belongs to the PHP family. Zn(2+) serves as cofactor.

This is Probable phosphatase Shewana3_2794 from Shewanella sp. (strain ANA-3).